We begin with the raw amino-acid sequence, 84 residues long: RNA-binding protein SAHV_0542 (84 aa).

It belongs to the eukaryotic ribosomal protein eL8 family.

In Staphylococcus aureus (strain Mu3 / ATCC 700698), this protein is RNA-binding protein SAHV_0542.